The chain runs to 6269 residues: Nonribosomal peptide synthetase 1 (6269 aa).

The tract at residues 249–781 (ENDWSRVCSF…VSGKLDRKSI (533 aa)) is adenylation 1. One can recognise a Carrier 1 domain in the interval 803–879 (RAANSTEDQL…ELATRVKGVT (77 aa)). Position 840 is an O-(pantetheine 4'-phosphoryl)serine (Ser840). The interval 894 to 1342 (LSPIQKLHFM…TLSDFPMLSL (449 aa)) is epimerase 1. The segment at 1373-1775 (SRMQQGILLS…FLQSLENIIH (403 aa)) is condensation 1. Residues 1725–2333 (HDPAEFPVYV…TGLLDRWFLR (609 aa)) are adenylation 2. The segment at 2364-2386 (KPSPSQLLPSSTSATHRSSGTST) is disordered. Positions 2367 to 2376 (PSQLLPSSTS) are enriched in low complexity. Polar residues predominate over residues 2377–2386 (ATHRSSGTST). The tract at residues 2597-2670 (WRKYLADVES…TGSEEVCYGY (74 aa)) is condensation 2. The adenylation 3 stretch occupies residues 2845-3368 (RCAHEIIEQQ…SGKLDRKKLR (524 aa)). The region spanning 3392-3468 (ASDEGVEGTL…NMAKRCGMLQ (77 aa)) is the Carrier 2 domain. At Ser3429 the chain carries O-(pantetheine 4'-phosphoryl)serine. Residues 3512–3898 (CSPVQEGLLT…GQFSFVLEQL (387 aa)) form a condensation 3 region. Residues 3919-4454 (DSKEVALWNK…VSGKLDRKKI (536 aa)) form an adenylation 4 region. The Carrier 3 domain occupies 4487 to 4563 (EDKSTAAKIL…ELIQAAEVET (77 aa)). Ser4524 is subject to O-(pantetheine 4'-phosphoryl)serine. Positions 4578 to 5024 (LSPIQNLYFK…DFPLLPITYD (447 aa)) are epimerase 2. The interval 5052-5466 (SSVQEGILLS…PSQLVSELDL (415 aa)) is condensation 4. A Carrier 4 domain is found at 5552–5628 (SKLMEPEKRL…DMLAAISASN (77 aa)). At Ser5589 the chain carries O-(pantetheine 4'-phosphoryl)serine. The tract at residues 5628–5658 (NSSSALEPDSPADSNNEKPAEPPRLVELERN) is disordered. Residues 5642 to 5657 (NNEKPAEPPRLVELER) show a composition bias toward basic and acidic residues. Residues 5720 to 6067 (FFFDGRGSLD…SSSDGKLGVS (348 aa)) form a condensation 5 region. The 82-residue stretch at 6139–6220 (SDILVHSDVV…GQMAVLTLHN (82 aa)) folds into the Carrier 5 domain.

This sequence belongs to the NRP synthetase family. In terms of processing, the thiolation domains are 4'-phosphopantetheinylated.

In terms of biological role, nonribosomal peptide synthesis (NRPS) is a key mechanism responsible for the biosynthesis of bioactive metabolites which are potentially contributing to organismal virulence. Contributes to improved fungal tolerance against oxidative stress, during the infection process. The chain is Nonribosomal peptide synthetase 1 (NRPS1) from Aspergillus fumigatus (strain ATCC MYA-4609 / CBS 101355 / FGSC A1100 / Af293) (Neosartorya fumigata).